A 1197-amino-acid polypeptide reads, in one-letter code: Sensor protein EvgS (1197 aa).

The signal sequence occupies residues 1–21; that stretch reads MKFLPYIFLLCCGLWSTISFA. Over 22 to 325 the chain is Cytoplasmic; that stretch reads DEDYIEYRGI…SMTDENGSVR (304 aa). Residues 326–346 traverse the membrane as a helical segment; it reads GVMGDILNIITLQTGLNFSPI. At 347-537 the chain is on the periplasmic side; that stretch reads TVSHNIHAGT…TWDLYSEQFY (191 aa). A helical transmembrane segment spans residues 538–558; the sequence is IVTTLSVLLVGSSLLWGFYLL. At 559 to 1197 the chain is on the cytoplasmic side; the sequence is RSVRRRKVIQ…EIAVFCQQNN (639 aa). The 221-residue stretch at 718–938 folds into the Histidine kinase domain; that stretch reads TMSHEIRTPI…TFTITIPVEI (221 aa). A Phosphohistidine; by autocatalysis modification is found at H721. The 115-residue stretch at 960-1074 folds into the Response regulatory domain; it reads SILIADDHPT…VLKTHLSQLH (115 aa). D1009 carries the post-translational modification 4-aspartylphosphate. The HPt domain occupies 1098-1197; the sequence is DLQLMQEILM…EIAVFCQQNN (100 aa). H1137 is subject to Phosphohistidine.

In terms of processing, activation requires a sequential transfer of a phosphate group from a His in the primary transmitter domain, to an Asp in the receiver domain and to a His in the secondary transmitter domain.

Its subcellular location is the cell inner membrane. It carries out the reaction ATP + protein L-histidine = ADP + protein N-phospho-L-histidine.. Functionally, member of the two-component regulatory system EvgS/EvgA. Phosphorylates EvgA via a four-step phosphorelay in response to environmental signals. This chain is Sensor protein EvgS (evgS), found in Escherichia coli O157:H7.